The primary structure comprises 175 residues: Small ribosomal subunit protein uS5 (175 aa).

Positions leucine 11–valine 74 constitute an S5 DRBM domain.

Belongs to the universal ribosomal protein uS5 family. Part of the 30S ribosomal subunit. Contacts proteins S4 and S8.

With S4 and S12 plays an important role in translational accuracy. Functionally, located at the back of the 30S subunit body where it stabilizes the conformation of the head with respect to the body. The polypeptide is Small ribosomal subunit protein uS5 (Rickettsia typhi (strain ATCC VR-144 / Wilmington)).